The chain runs to 454 residues: Replicative DNA helicase DnaC (454 aa).

Residues 179 to 445 (RKGDITGIPT…NKFVNLERRF (267 aa)) enclose the SF4 helicase domain. ATP is bound at residue 210–217 (ARPSVGKT).

The protein belongs to the helicase family. DnaB subfamily. As to quaternary structure, the DNA replisome assembles sequentially on oriC in this order; DnaA, DnaD, DnaB, DnaI-DnaC helicase. Monomer in the absence of ATP, in its presence forms a probable homohexamer which is not active as a helicase in vitro. Interacts separately and simultaneously with helicase loaders DnaB and DnaI. Interaction with DnaB does not require ATP. Interaction with DnaI requires ATP, probably forms a DnaC(6):DnaI(6) complex, which is not active as a helicase.

The protein localises to the cytoplasm. Its subcellular location is the nucleoid. It catalyses the reaction Couples ATP hydrolysis with the unwinding of duplex DNA at the replication fork by translocating in the 5'-3' direction. This creates two antiparallel DNA single strands (ssDNA). The leading ssDNA polymer is the template for DNA polymerase III holoenzyme which synthesizes a continuous strand.. The catalysed reaction is ATP + H2O = ADP + phosphate + H(+). Its function is as follows. The main replicative DNA helicase, it participates in initiation and elongation during chromosome replication. Travels ahead of the DNA replisome, separating dsDNA into templates for DNA synthesis. The monomer has helicase activity in the presence of DnaI which is further increased by DnaB; the purified oligomeric form (probably a DnaC hexamer) does not have helicase activity in vitro, nor does the DnaC(6):DnaI(6) complex. The direction was not determined but is probably 5'-3'. Helicase activity requires an rNTP and is inactive with dNTPs. Has weak ATPase activity as a monomer, as an oligomer has ATPase activity which is stimulated by single-stranded (ss)DNA and further stimulated by DnaI and more by DnaB. Functionally, deletion of a single T residue in the promoter region (a run of 8 Ts becomes 7 Ts) decreases the helicase levels by 50%, decreasing DNA replication inititation during fast growth in rich medium. Suppresses the synthetic lethality of a dnaA1-yabA deletion for growth on rich medium. The sequence is that of Replicative DNA helicase DnaC from Bacillus subtilis (strain 168).